The sequence spans 320 residues: o-succinylbenzoate synthase (320 aa).

The Proton donor role is filled by Lys133. Mg(2+) contacts are provided by Asp161, Glu190, and Asp213. Catalysis depends on Lys235, which acts as the Proton acceptor.

It belongs to the mandelate racemase/muconate lactonizing enzyme family. MenC type 1 subfamily. A divalent metal cation serves as cofactor.

It carries out the reaction (1R,6R)-6-hydroxy-2-succinyl-cyclohexa-2,4-diene-1-carboxylate = 2-succinylbenzoate + H2O. It functions in the pathway quinol/quinone metabolism; 1,4-dihydroxy-2-naphthoate biosynthesis; 1,4-dihydroxy-2-naphthoate from chorismate: step 4/7. It participates in quinol/quinone metabolism; menaquinone biosynthesis. Its function is as follows. Converts 2-succinyl-6-hydroxy-2,4-cyclohexadiene-1-carboxylate (SHCHC) to 2-succinylbenzoate (OSB). The polypeptide is o-succinylbenzoate synthase (Escherichia coli O45:K1 (strain S88 / ExPEC)).